Reading from the N-terminus, the 379-residue chain is Probable RNA methyltransferase RB6963 (379 aa).

The Proton acceptor role is filled by Glu-89. A Radical SAM core domain is found at 96–332; the sequence is ATGRTTLCVS…VRYSLGNDIE (237 aa). Cysteines 103 and 335 form a disulfide. [4Fe-4S] cluster contacts are provided by Cys-110, Cys-114, and Cys-117. Residues 160-161, Ser-192, 215-217, and Asn-291 contribute to the S-adenosyl-L-methionine site; these read GE and SLH. The S-methylcysteine intermediate role is filled by Cys-335.

This sequence belongs to the radical SAM superfamily. RlmN family. [4Fe-4S] cluster serves as cofactor.

It is found in the cytoplasm. In Rhodopirellula baltica (strain DSM 10527 / NCIMB 13988 / SH1), this protein is Probable RNA methyltransferase RB6963.